A 388-amino-acid chain; its full sequence is Salivary protein Tsal2A (388 aa).

Residues 1-18 (MSLLYGLLILAFTRSCLV) form the signal peptide. Residue Asn-260 is glycosylated (N-linked (GlcNAc...) asparagine).

The protein belongs to the DNA/RNA non-specific endonuclease family. A divalent metal cation serves as cofactor. In terms of tissue distribution, saliva (at protein level).

It localises to the secreted. In terms of biological role, binds double-stranded DNA (dsDNA) with high affinity. Binds double-stranded RNA. Binds single-stranded DNA with lower affinity and with a preference for purine-rich sequences. Shows residual nuclease activity for dsDNA. Facilitates blood meal intake by lowering the local viscosity created by the release of host DNA. The protein is Salivary protein Tsal2A of Glossina morsitans morsitans (Savannah tsetse fly).